Here is a 375-residue protein sequence, read N- to C-terminus: Fluoride export protein 2 (375 aa).

Topologically, residues 1-11 are cytoplasmic; it reads MIFNPVISNHK. A helical membrane pass occupies residues 12–32; sequence LSHYIHVFCTFTTFCILGTET. Residues 33–34 are Extracellular-facing; the sequence is RQ. The chain crosses the membrane as a helical span at residues 35–55; it reads AITALSTYTPAFVTAPTVLWS. Residues 56–79 lie on the Cytoplasmic side of the membrane; sequence NCSSCMLMGIMQSLNAYTWMKDHQ. Residues 80-100 form a helical membrane-spanning segment; sequence VLFLGVTTGYCGALSSFSSML. Over 101–127 the chain is Extracellular; the sequence is LEMFEHSTNLTNGNIANHTKLPNRAYG. N-linked (GlcNAc...) asparagine glycans are attached at residues Asn-109 and Asn-117. Residues 128–148 traverse the membrane as a helical segment; the sequence is IMEFLSVLLVHLMVSMGSLIF. Over 149-213 the chain is Cytoplasmic; that stretch reads GRQLGKEVIV…FKKFFDVVDK (65 aa). Residues 214–234 form a helical membrane-spanning segment; sequence LAYALAFPLIILFVVLCAYYE. Residue Asn-235 is glycosylated (N-linked (GlcNAc...) asparagine). Residues 235-241 are Extracellular-facing; sequence NYSRGKW. Residues 242–262 form a helical membrane-spanning segment; that stretch reads TLPCLFGIFAGFLRYWLAEMF. Topologically, residues 263–268 are cytoplasmic; sequence NKTNKK. Residues 269–289 traverse the membrane as a helical segment; sequence FPLGTFLANVFATLLIGIFTM. Topologically, residues 290–310 are extracellular; that stretch reads VQRGKKHFSTDIPIVNSLNSC. The chain crosses the membrane as a helical span at residues 311–331; it reads HIVSALISGFCGTLSTISTFI. Residues 332-338 are Cytoplasmic-facing; that stretch reads NEGYKLS. Residues 339 to 359 form a helical membrane-spanning segment; that stretch reads FINMLIYYTVSIGISYCLLVI. The Extracellular segment spans residues 360 to 375; that stretch reads TLGSYAWTRGLTNPIC.

It belongs to the fluoride channel Fluc/FEX (TC 1.A.43) family.

The protein localises to the cell membrane. The catalysed reaction is fluoride(in) = fluoride(out). Fluoride channel required for the rapid expulsion of cytoplasmic fluoride. The chain is Fluoride export protein 2 from Saccharomyces cerevisiae (strain ATCC 204508 / S288c) (Baker's yeast).